We begin with the raw amino-acid sequence, 148 residues long: D-aminoacyl-tRNA deacylase (148 aa).

The short motif at 137 to 138 (GP) is the Gly-cisPro motif, important for rejection of L-amino acids element.

It belongs to the DTD family. In terms of assembly, homodimer.

It localises to the cytoplasm. The catalysed reaction is glycyl-tRNA(Ala) + H2O = tRNA(Ala) + glycine + H(+). The enzyme catalyses a D-aminoacyl-tRNA + H2O = a tRNA + a D-alpha-amino acid + H(+). Functionally, an aminoacyl-tRNA editing enzyme that deacylates mischarged D-aminoacyl-tRNAs. Also deacylates mischarged glycyl-tRNA(Ala), protecting cells against glycine mischarging by AlaRS. Acts via tRNA-based rather than protein-based catalysis; rejects L-amino acids rather than detecting D-amino acids in the active site. By recycling D-aminoacyl-tRNA to D-amino acids and free tRNA molecules, this enzyme counteracts the toxicity associated with the formation of D-aminoacyl-tRNA entities in vivo and helps enforce protein L-homochirality. This chain is D-aminoacyl-tRNA deacylase, found in Latilactobacillus sakei subsp. sakei (strain 23K) (Lactobacillus sakei subsp. sakei).